Consider the following 99-residue polypeptide: Evasin P1162 (99 aa).

The signal sequence occupies residues 1–28 (MEVKTFAFLQIAVCIAIGIELICAGTNA). 3 cysteine pairs are disulfide-bonded: C40/C59, C44/C61, and C55/C72. Residues N43, N49, N58, and N85 are each glycosylated (N-linked (GlcNAc...) asparagine).

Its subcellular location is the secreted. In terms of biological role, salivary chemokine-binding protein which binds to host chemokines CXCL1, CXCL2, CXCL3, CXCL5 and CXCL8. This chain is Evasin P1162, found in Ixodes ricinus (Common tick).